We begin with the raw amino-acid sequence, 25 residues long: Metallothionein (25 aa).

Residues cysteine 3, cysteine 5, cysteine 11, cysteine 13, cysteine 18, cysteine 20, and cysteine 23 each contribute to the Cu(+) site.

It belongs to the metallothionein superfamily. Type 8 family.

Functionally, the metallothioneins are involved in the cellular sequestration of toxic metal ions. Binds six copper (cuprous) ions. This is Metallothionein from Agaricus bisporus (White button mushroom).